A 318-amino-acid chain; its full sequence is Coproporphyrin III ferrochelatase (318 aa).

Residues His-186 and Glu-268 each coordinate Fe(2+).

The protein belongs to the ferrochelatase family.

It localises to the cytoplasm. It catalyses the reaction Fe-coproporphyrin III + 2 H(+) = coproporphyrin III + Fe(2+). Its pathway is porphyrin-containing compound metabolism; protoheme biosynthesis. Functionally, involved in coproporphyrin-dependent heme b biosynthesis. Catalyzes the insertion of ferrous iron into coproporphyrin III to form Fe-coproporphyrin III. The sequence is that of Coproporphyrin III ferrochelatase from Lactococcus lactis subsp. cremoris (strain SK11).